The primary structure comprises 443 residues: D-serine dehydratase (443 aa).

At K118 the chain carries N6-(pyridoxal phosphate)lysine.

The protein belongs to the serine/threonine dehydratase family. DsdA subfamily. In terms of assembly, monomer. Pyridoxal 5'-phosphate is required as a cofactor.

It catalyses the reaction D-serine = pyruvate + NH4(+). The chain is D-serine dehydratase from Yersinia enterocolitica serotype O:8 / biotype 1B (strain NCTC 13174 / 8081).